The following is a 469-amino-acid chain: 3-isopropylmalate dehydratase large subunit (469 aa).

Residues Cys347, Cys408, and Cys411 each coordinate [4Fe-4S] cluster.

Belongs to the aconitase/IPM isomerase family. LeuC type 1 subfamily. As to quaternary structure, heterodimer of LeuC and LeuD. It depends on [4Fe-4S] cluster as a cofactor.

It catalyses the reaction (2R,3S)-3-isopropylmalate = (2S)-2-isopropylmalate. It functions in the pathway amino-acid biosynthesis; L-leucine biosynthesis; L-leucine from 3-methyl-2-oxobutanoate: step 2/4. In terms of biological role, catalyzes the isomerization between 2-isopropylmalate and 3-isopropylmalate, via the formation of 2-isopropylmaleate. The sequence is that of 3-isopropylmalate dehydratase large subunit from Histophilus somni (strain 129Pt) (Haemophilus somnus).